A 163-amino-acid chain; its full sequence is Endoribonuclease YbeY (163 aa).

Positions 121, 125, and 131 each coordinate Zn(2+).

It belongs to the endoribonuclease YbeY family. The cofactor is Zn(2+).

The protein localises to the cytoplasm. Single strand-specific metallo-endoribonuclease involved in late-stage 70S ribosome quality control and in maturation of the 3' terminus of the 16S rRNA. The sequence is that of Endoribonuclease YbeY from Synechococcus sp. (strain JA-2-3B'a(2-13)) (Cyanobacteria bacterium Yellowstone B-Prime).